The sequence spans 61 residues: Metallothionein-2 (61 aa).

The residue at position 1 (Met1) is an N-acetylmethionine. The beta stretch occupies residues 1–29 (MDPNCSCTAGESCTCAGSCKCKDCKCASC). Cys5, Cys7, Cys13, Cys15, Cys19, Cys21, Cys24, Cys26, Cys29, Cys33, Cys34, Cys36, Cys37, Cys41, Cys44, Cys48, Cys50, and Cys57 together coordinate a divalent metal cation. The alpha stretch occupies residues 30–61 (KKSCCSCCPVGCAKCAQGCVCKGASDKCSCCA). Ser58 carries the phosphoserine modification. The a divalent metal cation site is built by Cys59 and Cys60.

Belongs to the metallothionein superfamily. Type 1 family. In terms of assembly, interacts with EOLA1.

Functionally, metallothioneins have a high content of cysteine residues that bind various heavy metals; these proteins are transcriptionally regulated by both heavy metals and glucocorticoids. The polypeptide is Metallothionein-2 (MT2A) (Ovis aries (Sheep)).